We begin with the raw amino-acid sequence, 463 residues long: Sodium-coupled neutral amino acid transporter 7 (463 aa).

At Ser28 the chain carries Phosphoserine. 11 helical membrane-spanning segments follow: residues 56–76, 82–102, 130–150, 179–199, 206–226, 240–260, 283–303, 320–340, 372–392, 396–416, and 429–449; these read AIFI…PAAF, VAAG…GLVI, LCEV…LIII, FTIS…REIG, FLSV…YIWP, ASWI…QCHV, AAMV…FLTF, MAVA…YPIL, VLQT…IPDI, ISVI…LCLI, and ASWW…AFIF.

Belongs to the amino acid/polyamine transporter 2 family. As to quaternary structure, interacts with the mTORC1 complex; this interaction mediates the recruitment of mTORC1 to the lysosome and its subsequent activation.

The protein resides in the lysosome membrane. Its subcellular location is the cell projection. The protein localises to the axon. It carries out the reaction L-asparagine(in) + Na(+)(in) = L-asparagine(out) + Na(+)(out). It catalyses the reaction L-glutamine(in) + Na(+)(in) = L-glutamine(out) + Na(+)(out). Its function is as follows. Symporter that selectively cotransports sodium ions and amino acids, such as L-glutamine and L-asparagine from the lysosome into the cytoplasm and may participates in mTORC1 activation. The transport activity requires an acidic lysosomal lumen. This chain is Sodium-coupled neutral amino acid transporter 7, found in Bos taurus (Bovine).